Here is a 1341-residue protein sequence, read N- to C-terminus: Aldehyde oxidase 4 (1341 aa).

A 2Fe-2S ferredoxin-type domain is found at 8 to 95 (DELIFFVNGK…GAAVTTVEGV (88 aa)). [2Fe-2S] cluster is bound by residues Cys-47, Cys-52, Cys-55, and Cys-77. Position 116 (Gln-116) interacts with Mo-molybdopterin. 4 residues coordinate [2Fe-2S] cluster: Cys-117, Cys-120, Cys-152, and Cys-154. Cys-154 is a Mo-molybdopterin binding site. An FAD-binding PCMH-type domain is found at 239-424 (FQGERTTWLA…LSVFIPYSSQ (186 aa)). FAD is bound by residues 267-274 (LIMGNTTV), Ala-348, Thr-357, His-361, Asp-370, and Val-414. Residues Ala-805, 805-806 (AF), Leu-1046, 1087-1090 (GSMG), Gln-1202, and Leu-1266 contribute to the Mo-molybdopterin site. Glu-1268 acts as the Proton acceptor; for azaheterocycle hydroxylase activity in catalysis.

Belongs to the xanthine dehydrogenase family. In terms of assembly, homodimer. [2Fe-2S] cluster serves as cofactor. The cofactor is FAD. Requires Mo-molybdopterin as cofactor. As to expression, detected in liver, testis, kidney, brain, Harderian gland and olfactory mucosa.

The protein localises to the cytoplasm. The enzyme catalyses an aldehyde + O2 + H2O = a carboxylate + H2O2 + H(+). It catalyses the reaction retinal + O2 + H2O = retinoate + H2O2 + H(+). Its function is as follows. Aldehyde oxidase able to catalyze the oxidation of retinaldehyde into retinoate. Acts as a negative modulator of the epidermal trophism. May be able to oxidize a wide variety of aldehydes into their corresponding carboxylates and to hydroxylate azaheterocycles. This Cavia porcellus (Guinea pig) protein is Aldehyde oxidase 4 (AOX4).